Consider the following 200-residue polypeptide: Adenylate kinase (200 aa).

10 to 15 (GAGKGT) contacts ATP. Residues 30 to 59 (STGDMLRAAVAAETPVGLEAKAIMESGGLV) form an NMP region. Residues Thr-31, Arg-36, 57–59 (GLV), 85–88 (GFPR), and Gln-92 contribute to the AMP site. Positions 126 to 142 (KRAEETAARGQPVRKDD) are LID. ATP is bound at residue Arg-127. The AMP site is built by Arg-139 and Arg-150. Lys-178 lines the ATP pocket.

Belongs to the adenylate kinase family. In terms of assembly, monomer.

Its subcellular location is the cytoplasm. The catalysed reaction is AMP + ATP = 2 ADP. It participates in purine metabolism; AMP biosynthesis via salvage pathway; AMP from ADP: step 1/1. In terms of biological role, catalyzes the reversible transfer of the terminal phosphate group between ATP and AMP. Plays an important role in cellular energy homeostasis and in adenine nucleotide metabolism. This Methylorubrum extorquens (strain PA1) (Methylobacterium extorquens) protein is Adenylate kinase.